The primary structure comprises 490 residues: Bifunctional IPC transferase and DIPP synthase (490 aa).

The mobA-like NTP transferase stretch occupies residues 72–290 (LMKAVILAAG…RANRALVSAA (219 aa)). CTP contacts are provided by residues 78–80 (LAA), K91, D144, and E180. E180 serves as a coordination point for Mg(2+). A CDP-alcohol phosphatidyltransferases region spans residues 291–490 (VKGSGDGFIS…VTLLAVLVSK (200 aa)). 4 helical membrane passes run 329–349 (FLVG…AGLL), 389–409 (FLAI…FAIF), 447–467 (IFLI…IFWM), and 468–488 (FLFV…AVLV).

This sequence in the N-terminal section; belongs to the MobA family. It in the C-terminal section; belongs to the CDP-alcohol phosphatidyltransferase class-I family. In terms of assembly, forms a mixture of monomers and dimers in solution, with prevalence of the monomeric form. The cofactor is Mg(2+).

The protein localises to the membrane. It catalyses the reaction 1D-myo-inositol 3-phosphate + CTP + H(+) = CDP-1L-myo-inositol + diphosphate. The enzyme catalyses CDP-1L-myo-inositol + 1D-myo-inositol 3-phosphate = bis(1L-myo-inositol) 3,1'-phosphate 1-phosphate + CMP + H(+). Its function is as follows. Involved in biosynthesis of di-myo-inositol phosphate (DIP), a widespread organic solute in microorganisms adapted to hot environments. Catalyzes the condensation of CTP and L-myo-inositol-1-phosphate into CDP-L-myo-inositol, as well as the biosynthesis of di-myo-inositol-1,3'-phosphate-1'-phosphate (DIPP) from CDP-L-myo-inositol and L-myo-inositol-1-phosphate. The cytidylyltransferase is absolutely specific for CTP and L-myo-inositol-1-P. The DIPP synthase uses only L-myoinositol-1-phosphate as an alcohol acceptor, but CDP-glycerol, as well as CDP-L-myo-inositol and CDP-D-myoinositol, are recognized as alcohol donors. This Archaeoglobus fulgidus (strain ATCC 49558 / DSM 4304 / JCM 9628 / NBRC 100126 / VC-16) protein is Bifunctional IPC transferase and DIPP synthase.